Here is a 347-residue protein sequence, read N- to C-terminus: HTH-type transcriptional regulator PhcA (347 aa).

The 61-residue stretch at 1-61 (MVNVDTKLLV…IRVPHGLTPT (61 aa)) folds into the HTH lysR-type domain. Positions 21-40 (ATYVAEKMHMTAPAVSHSLG) form a DNA-binding region, H-T-H motif. Residues 316–347 (PMHPPMLTDDSGKSGKTGKGDAEKEDESRLSV) form a disordered region. Residues 325-347 (DSGKSGKTGKGDAEKEDESRLSV) show a composition bias toward basic and acidic residues.

This sequence belongs to the LysR transcriptional regulatory family.

In terms of biological role, regulates the transcription of one or more of the genes involved in virulence. The protein is HTH-type transcriptional regulator PhcA (phcA) of Ralstonia nicotianae (strain ATCC BAA-1114 / GMI1000) (Ralstonia solanacearum).